We begin with the raw amino-acid sequence, 25 residues long: Antimicrobial peptide THP3 (25 aa).

It localises to the secreted. Its function is as follows. Bactericidal activity; inhibits Staphylococcus aureus. The protein is Antimicrobial peptide THP3 of Meleagris gallopavo (Wild turkey).